A 586-amino-acid chain; its full sequence is A-type ATP synthase subunit A (586 aa).

Position 238 to 245 (238 to 245) interacts with ATP; sequence GPFGSGKT.

The protein belongs to the ATPase alpha/beta chains family. Has multiple subunits with at least A(3), B(3), C, D, E, F, H, I and proteolipid K(x).

It is found in the cell membrane. The catalysed reaction is ATP + H2O + 4 H(+)(in) = ADP + phosphate + 5 H(+)(out). Functionally, component of the A-type ATP synthase that produces ATP from ADP in the presence of a proton gradient across the membrane. The A chain is the catalytic subunit. This chain is A-type ATP synthase subunit A, found in Haloferax volcanii (strain ATCC 29605 / DSM 3757 / JCM 8879 / NBRC 14742 / NCIMB 2012 / VKM B-1768 / DS2) (Halobacterium volcanii).